The following is a 325-amino-acid chain: MNPFTDYQVQFFERIKLKPRIIESLDDISEVLVACSKVFTFENLDIISNTQEALTRKVLIKQVLINKQGGLCYKANTLLYYFLLDFGLNVHQTRATCENQESHSRWNIGHGHMINILNFENKLYVMDVAFGCNLSLRPVPITDDGSEVIESCIGLYRVIKRENIVAGVYHYTHILEHRKPDTYLIESAKNWVIGYAFDPLLICKNDGDDDDDDNNNNNNTHQTQIQQLVIDDPNKDFCVKPLATKLINNTDNNNNNNSIATLTLNSFTLTNCKTGEKIKTNFDNDNLFEQFNQHLISIFNLPPLKIIPQIFLNQTSNFPINNLNS.

Cys72 functions as the Acyl-thioester intermediate in the catalytic mechanism. Catalysis depends on residues His112 and Asp127.

The protein belongs to the arylamine N-acetyltransferase family.

It catalyses the reaction an arylamine + acetyl-CoA = an N-acetylarylamine + CoA. In Dictyostelium discoideum (Social amoeba), this protein is Probable arylamine N-acetyltransferase 1.